The following is a 331-amino-acid chain: Adenine deaminase (331 aa).

The Zn(2+) site is built by H17, H19, and H197. The active-site Proton donor is E200. D278 is a Zn(2+) binding site. A substrate-binding site is contributed by D279.

It belongs to the metallo-dependent hydrolases superfamily. Adenosine and AMP deaminases family. Adenine deaminase type 2 subfamily. Zn(2+) serves as cofactor.

It carries out the reaction adenine + H2O + H(+) = hypoxanthine + NH4(+). Catalyzes the hydrolytic deamination of adenine to hypoxanthine. Plays an important role in the purine salvage pathway and in nitrogen catabolism. The polypeptide is Adenine deaminase (Wolinella succinogenes (strain ATCC 29543 / DSM 1740 / CCUG 13145 / JCM 31913 / LMG 7466 / NCTC 11488 / FDC 602W) (Vibrio succinogenes)).